The following is a 261-amino-acid chain: tRNA pseudouridine synthase A (261 aa).

The active-site Nucleophile is the Asp-51. Tyr-109 contacts substrate.

It belongs to the tRNA pseudouridine synthase TruA family. Homodimer.

The catalysed reaction is uridine(38/39/40) in tRNA = pseudouridine(38/39/40) in tRNA. Its function is as follows. Formation of pseudouridine at positions 38, 39 and 40 in the anticodon stem and loop of transfer RNAs. This chain is tRNA pseudouridine synthase A, found in Tolumonas auensis (strain DSM 9187 / NBRC 110442 / TA 4).